We begin with the raw amino-acid sequence, 343 residues long: MIKLSNITKVFHQGTRTIQALNNVSLHVPAGQIYGVIGASGAGKSTLIRCVNLLERPTEGSVLVDGQELTTLSESELTKARRQIGMIFQHFNLLSSRTVFGNVALPLELDNTPKDEIKRRVTELLSLVGLGDKHDSYPSNLSGGQKQRVAIARALASNPKVLLCDEATSALDPATTRSILELLKDINRRLGLTILLITHEMDVVKRICDCVAVISNGELIEQDTVSEVFSHPKTPLAQKFIQSTLHLDIPEDYQERLQAEPFADCVPMLRLEFTGQSVDAPLLSETARRFNVNNNIISAQMDYAGGVKFGIMLTEMHGTQQDTQAAIAWLQEHHVKVEVLGYV.

One can recognise an ABC transporter domain in the interval 2 to 241 (IKLSNITKVF…PKTPLAQKFI (240 aa)). Residue 38 to 45 (GASGAGKS) participates in ATP binding.

The protein belongs to the ABC transporter superfamily. Methionine importer (TC 3.A.1.24) family. As to quaternary structure, the complex is composed of two ATP-binding proteins (MetN), two transmembrane proteins (MetI) and a solute-binding protein (MetQ).

It is found in the cell inner membrane. It catalyses the reaction L-methionine(out) + ATP + H2O = L-methionine(in) + ADP + phosphate + H(+). The catalysed reaction is D-methionine(out) + ATP + H2O = D-methionine(in) + ADP + phosphate + H(+). Functionally, part of the ABC transporter complex MetNIQ involved in methionine import. Responsible for energy coupling to the transport system. The sequence is that of Methionine import ATP-binding protein MetN from Escherichia coli O6:K15:H31 (strain 536 / UPEC).